We begin with the raw amino-acid sequence, 614 residues long: Baeyer-Villiger monooxygenase peniC (614 aa).

Residues E99, 107–110 (TWHW), D119, and Y125 each bind FAD. NADP(+) is bound by residues 255 to 261 (TGASGVQ), 278 to 279 (RT), and 398 to 399 (KR).

It belongs to the FAD-binding monooxygenase family. FAD is required as a cofactor.

The catalysed reaction is gamma-lactone-2-keto[5.5.5.5]fenestrane + NADPH + O2 + H(+) = penifulvin A + NADP(+) + H2O. It functions in the pathway secondary metabolite biosynthesis; terpenoid biosynthesis. Functionally, baeyer-Villiger monooxygenase; part of the gene cluster that mediates the biosynthesis of penifulvin A, a potent insecticidal sesquiterpene that features a [5.5.5.6]dioxafenestrane ring. Within the pathway, peniC is responsible for the final regioselective Baeyer-Villiger oxidation of gamma-lactone-2-keto[5.5.5.5]fenestran between C1 and C2 to form the delta-lactone moiety of penifulvin A. The first step of the pathway is performed by the sesquiterpene cyclase peniA that generates the angular triquinane scaffold silphinene via cyclization of the linear farnesyl pyrophosphate (FPP). The cytochrome P450 monooxygenase peniB and the flavin-dependent monooxygenase peniC then catalyze a series of oxidation reactions to transform silphinene into penifulvin A. The protein is Baeyer-Villiger monooxygenase peniC of Penicillium patulum (Penicillium griseofulvum).